The chain runs to 492 residues: N-succinylglutamate 5-semialdehyde dehydrogenase (492 aa).

Residue 220–225 (GSANTG) participates in NAD(+) binding. Catalysis depends on residues Glu-243 and Cys-277.

The protein belongs to the aldehyde dehydrogenase family. AstD subfamily.

It carries out the reaction N-succinyl-L-glutamate 5-semialdehyde + NAD(+) + H2O = N-succinyl-L-glutamate + NADH + 2 H(+). Its pathway is amino-acid degradation; L-arginine degradation via AST pathway; L-glutamate and succinate from L-arginine: step 4/5. Catalyzes the NAD-dependent reduction of succinylglutamate semialdehyde into succinylglutamate. This is N-succinylglutamate 5-semialdehyde dehydrogenase from Escherichia coli O9:H4 (strain HS).